Here is a 177-residue protein sequence, read N- to C-terminus: Large ribosomal subunit protein uL6 (177 aa).

It belongs to the universal ribosomal protein uL6 family. In terms of assembly, part of the 50S ribosomal subunit.

Functionally, this protein binds to the 23S rRNA, and is important in its secondary structure. It is located near the subunit interface in the base of the L7/L12 stalk, and near the tRNA binding site of the peptidyltransferase center. In Idiomarina loihiensis (strain ATCC BAA-735 / DSM 15497 / L2-TR), this protein is Large ribosomal subunit protein uL6.